The chain runs to 239 residues: Uridylate kinase (239 aa).

12–15 is a binding site for ATP; sequence KLSG. G54 is a UMP binding site. Residues G55 and R59 each coordinate ATP. Residues D74 and 135 to 142 contribute to the UMP site; that span reads TGNPYFTT. ATP is bound by residues T162, Y168, and D171.

It belongs to the UMP kinase family. Homohexamer.

Its subcellular location is the cytoplasm. The catalysed reaction is UMP + ATP = UDP + ADP. It functions in the pathway pyrimidine metabolism; CTP biosynthesis via de novo pathway; UDP from UMP (UMPK route): step 1/1. With respect to regulation, inhibited by UTP. Catalyzes the reversible phosphorylation of UMP to UDP. This is Uridylate kinase from Fusobacterium nucleatum subsp. nucleatum (strain ATCC 25586 / DSM 15643 / BCRC 10681 / CIP 101130 / JCM 8532 / KCTC 2640 / LMG 13131 / VPI 4355).